A 176-amino-acid chain; its full sequence is Protein GrpE (176 aa).

The segment at 1-28 is disordered; sequence MSEQKQEFENENAENSEHLQDENLQNIE.

This sequence belongs to the GrpE family. In terms of assembly, homodimer.

The protein localises to the cytoplasm. Functionally, participates actively in the response to hyperosmotic and heat shock by preventing the aggregation of stress-denatured proteins, in association with DnaK and GrpE. It is the nucleotide exchange factor for DnaK and may function as a thermosensor. Unfolded proteins bind initially to DnaJ; upon interaction with the DnaJ-bound protein, DnaK hydrolyzes its bound ATP, resulting in the formation of a stable complex. GrpE releases ADP from DnaK; ATP binding to DnaK triggers the release of the substrate protein, thus completing the reaction cycle. Several rounds of ATP-dependent interactions between DnaJ, DnaK and GrpE are required for fully efficient folding. The chain is Protein GrpE from Campylobacter jejuni subsp. jejuni serotype O:2 (strain ATCC 700819 / NCTC 11168).